Reading from the N-terminus, the 305-residue chain is Coenzyme PQQ synthesis protein B (305 aa).

It belongs to the PqqB family.

It functions in the pathway cofactor biosynthesis; pyrroloquinoline quinone biosynthesis. Its function is as follows. May be involved in the transport of PQQ or its precursor to the periplasm. The chain is Coenzyme PQQ synthesis protein B from Methylobacillus flagellatus (strain ATCC 51484 / DSM 6875 / VKM B-1610 / KT).